The sequence spans 344 residues: tRNA N6-adenosine threonylcarbamoyltransferase (344 aa).

His110 and His114 together coordinate Fe cation. Substrate-binding positions include 132–136 (LVSGG), Asp166, Gly179, Asp183, and Asn278. Asp306 is a binding site for Fe cation.

It belongs to the KAE1 / TsaD family. It depends on Fe(2+) as a cofactor.

The protein resides in the cytoplasm. The enzyme catalyses L-threonylcarbamoyladenylate + adenosine(37) in tRNA = N(6)-L-threonylcarbamoyladenosine(37) in tRNA + AMP + H(+). Functionally, required for the formation of a threonylcarbamoyl group on adenosine at position 37 (t(6)A37) in tRNAs that read codons beginning with adenine. Is involved in the transfer of the threonylcarbamoyl moiety of threonylcarbamoyl-AMP (TC-AMP) to the N6 group of A37, together with TsaE and TsaB. TsaD likely plays a direct catalytic role in this reaction. This is tRNA N6-adenosine threonylcarbamoyltransferase from Nocardia farcinica (strain IFM 10152).